Here is a 312-residue protein sequence, read N- to C-terminus: tRNA dimethylallyltransferase (312 aa).

Residue 11-18 (GPTAVGKT) coordinates ATP. Substrate is bound at residue 13-18 (TAVGKT). The interaction with substrate tRNA stretch occupies residues 159–163 (QRVLR).

The protein belongs to the IPP transferase family. As to quaternary structure, monomer. Mg(2+) is required as a cofactor.

The catalysed reaction is adenosine(37) in tRNA + dimethylallyl diphosphate = N(6)-dimethylallyladenosine(37) in tRNA + diphosphate. Catalyzes the transfer of a dimethylallyl group onto the adenine at position 37 in tRNAs that read codons beginning with uridine, leading to the formation of N6-(dimethylallyl)adenosine (i(6)A). This is tRNA dimethylallyltransferase from Macrococcus caseolyticus (strain JCSC5402) (Macrococcoides caseolyticum).